The following is a 106-amino-acid chain: PAT complex subunit Asterix (106 aa).

Residues 1-29 are disordered; that stretch reads MSTNNMSDPRRPNKVLRYKPPPSECNPAL. N-acetylserine is present on S2. The Cytoplasmic segment spans residues 2 to 32; sequence STNNMSDPRRPNKVLRYKPPPSECNPALDDP. The chain crosses the membrane as a helical span at residues 33–51; it reads TPDYMNLLGMIFSMCGLML. Residue K52 is a topological domain, lumenal. Residues 53-70 traverse the membrane as a helical segment; it reads LKWCAWVAVYCSFISFAN. The Cytoplasmic segment spans residues 71–74; it reads SRSS. A helical transmembrane segment spans residues 75–95; sequence EDTKQMMSSFMLSISAVVMSY. Residues 96-106 lie on the Lumenal side of the membrane; sequence LQNPQPMTPPW.

The protein belongs to the Asterix family. In terms of assembly, component of the PAT complex, composed of WDR83OS/Asterix and CCDC47. The PAT complex is part of the multi-pass translocon (MPT) complex, composed of three subcomplexes, the GEL complex (composed of RAB5IF/OPTI and TMCO1), the BOS complex (composed of NCLN/Nicalin, NOMO1 and TMEM147) and the PAT complex (composed of WDR83OS/Asterix and CCDC47). The MPT complex associates with the SEC61 complex.

It localises to the endoplasmic reticulum membrane. In terms of biological role, component of the multi-pass translocon (MPT) complex that mediates insertion of multi-pass membrane proteins into the lipid bilayer of membranes. The MPT complex takes over after the SEC61 complex: following membrane insertion of the first few transmembrane segments of proteins by the SEC61 complex, the MPT complex occludes the lateral gate of the SEC61 complex to promote insertion of subsequent transmembrane regions. Within the MPT complex, the PAT subcomplex sequesters any highly polar regions in the transmembrane domains away from the non-polar membrane environment until they can be buried in the interior of the fully assembled protein. Within the PAT subcomplex, WDR83OS/Asterix binds to and redirects the substrate to a location behind the SEC61 complex. This Canis lupus familiaris (Dog) protein is PAT complex subunit Asterix (WDR83OS).